The chain runs to 486 residues: UDP-N-acetylmuramoyl-L-alanyl-D-glutamate--2,6-diaminopimelate ligase (486 aa).

UDP-N-acetyl-alpha-D-muramoyl-L-alanyl-D-glutamate is bound at residue Ser33. Position 110 to 116 (110 to 116) interacts with ATP; sequence GTNGKTS. UDP-N-acetyl-alpha-D-muramoyl-L-alanyl-D-glutamate contacts are provided by residues 152 to 153, Ser179, Gln185, and Arg187; that span reads TT. Lys219 carries the post-translational modification N6-carboxylysine. Meso-2,6-diaminopimelate-binding positions include Arg383, 407–410, Gly455, and Glu459; that span reads DNPR. The Meso-diaminopimelate recognition motif signature appears at 407–410; that stretch reads DNPR.

The protein belongs to the MurCDEF family. MurE subfamily. It depends on Mg(2+) as a cofactor. Post-translationally, carboxylation is probably crucial for Mg(2+) binding and, consequently, for the gamma-phosphate positioning of ATP.

Its subcellular location is the cytoplasm. It catalyses the reaction UDP-N-acetyl-alpha-D-muramoyl-L-alanyl-D-glutamate + meso-2,6-diaminopimelate + ATP = UDP-N-acetyl-alpha-D-muramoyl-L-alanyl-gamma-D-glutamyl-meso-2,6-diaminopimelate + ADP + phosphate + H(+). It participates in cell wall biogenesis; peptidoglycan biosynthesis. Its function is as follows. Catalyzes the addition of meso-diaminopimelic acid to the nucleotide precursor UDP-N-acetylmuramoyl-L-alanyl-D-glutamate (UMAG) in the biosynthesis of bacterial cell-wall peptidoglycan. The sequence is that of UDP-N-acetylmuramoyl-L-alanyl-D-glutamate--2,6-diaminopimelate ligase from Zymomonas mobilis subsp. mobilis (strain ATCC 31821 / ZM4 / CP4).